The chain runs to 466 residues: Fez family zinc finger protein 1 (466 aa).

Residues 34-49 carry the Engrailed homology 1 repressor motif; the sequence is PLAFSIERIMSRTPEP. 6 consecutive C2H2-type zinc fingers follow at residues 261–283, 289–311, 317–339, 345–367, 373–395, and 401–424; these read FTCE…MPVH, FVCK…KIIH, HKCN…TRIH, FVCE…KLTH, FKCN…MHTH, and FTCP…RKLH. The tract at residues 446 to 466 is disordered; sequence LPNREQSHTIIQSPQLQKSVY. Over residues 453-466 the composition is skewed to polar residues; sequence HTIIQSPQLQKSVY.

It belongs to the krueppel C2H2-type zinc-finger protein family.

It localises to the nucleus. Transcription repressor. Involved in the development of the forebrain region. The sequence is that of Fez family zinc finger protein 1 (fezf1) from Xenopus laevis (African clawed frog).